The chain runs to 310 residues: Tagatose-6-phosphate kinase (310 aa).

This sequence belongs to the carbohydrate kinase PfkB family. LacC subfamily.

The enzyme catalyses D-tagatofuranose 6-phosphate + ATP = D-tagatofuranose 1,6-bisphosphate + ADP + H(+). The protein operates within carbohydrate metabolism; D-tagatose 6-phosphate degradation; D-glyceraldehyde 3-phosphate and glycerone phosphate from D-tagatose 6-phosphate: step 1/2. This is Tagatose-6-phosphate kinase from Staphylococcus aureus (strain bovine RF122 / ET3-1).